The following is a 389-amino-acid chain: S-adenosylmethionine synthase (389 aa).

H16 contacts ATP. A Mg(2+)-binding site is contributed by D18. A K(+)-binding site is contributed by E44. L-methionine contacts are provided by E57 and Q100. The segment at 100 to 110 (QSPDIAQGVDE) is flexible loop. ATP contacts are provided by residues 167–169 (DAK), 233–234 (RF), D242, 248–249 (RK), A265, and K269. D242 is an L-methionine binding site. K273 serves as a coordination point for L-methionine.

It belongs to the AdoMet synthase family. In terms of assembly, homotetramer; dimer of dimers. The cofactor is Mg(2+). K(+) serves as cofactor.

Its subcellular location is the cytoplasm. It catalyses the reaction L-methionine + ATP + H2O = S-adenosyl-L-methionine + phosphate + diphosphate. The protein operates within amino-acid biosynthesis; S-adenosyl-L-methionine biosynthesis; S-adenosyl-L-methionine from L-methionine: step 1/1. Its function is as follows. Catalyzes the formation of S-adenosylmethionine (AdoMet) from methionine and ATP. The overall synthetic reaction is composed of two sequential steps, AdoMet formation and the subsequent tripolyphosphate hydrolysis which occurs prior to release of AdoMet from the enzyme. The sequence is that of S-adenosylmethionine synthase from Acidithiobacillus ferrooxidans (strain ATCC 23270 / DSM 14882 / CIP 104768 / NCIMB 8455) (Ferrobacillus ferrooxidans (strain ATCC 23270)).